The following is a 388-amino-acid chain: Probable proton-coupled zinc antiporter SLC30A3 (388 aa).

Residues 1 to 13 (MEPSPTTGGSETT) are compositionally biased toward polar residues. Disordered stretches follow at residues 1–30 (MEPS…GLRL) and 35–54 (TEAP…SFHH). The Cytoplasmic portion of the chain corresponds to 1–75 (MEPSPTTGGS…TPERMQAQRQ (75 aa)). The helical transmembrane segment at 76 to 96 (LCTACAVCCVFMAGEVVGGYL) threads the bilayer. Residues 97–105 (AHSLAIMTD) are Lumenal-facing. A helical membrane pass occupies residues 106 to 126 (AAHLLADVGSMMGSLFSLWLS). Zn(2+) is bound by residues H108 and D112. Residues 127-145 (TRPATRTMTFGWHRSETLG) are Cytoplasmic-facing. A helical membrane pass occupies residues 146 to 166 (ALASVVSLWMVTGILLYLAFI). At 167 to 177 (RLLHSDYHIEG) the chain is on the lumenal side. The helical transmembrane segment at 178–198 (GAMLLTASIAVCANLLMAFVL) threads the bilayer. Residues 199-235 (HQAGPPHSHGSRGAEYAPLEEGSGEPLPLGNTSVRAA) lie on the Cytoplasmic side of the membrane. The helical transmembrane segment at 236-256 (FVHVLGDLLQSLGVLIASILI) threads the bilayer. The Zn(2+) site is built by H238 and D242. At 257 to 264 (YFKPQYKA) the chain is on the lumenal side. A helical membrane pass occupies residues 265–285 (ADPISTFLFSICALGSTAPTL). Over 286–388 (RDVLRVLMEG…CLRCQEPPQA (103 aa)) the chain is Cytoplasmic.

Belongs to the cation diffusion facilitator (CDF) transporter (TC 2.A.4) family. SLC30A subfamily. As to quaternary structure, homodimer. Homodimerization could regulate efficiency of zinc transport. Interacts with TMEM163.

It localises to the cytoplasmic vesicle. The protein resides in the secretory vesicle. Its subcellular location is the synaptic vesicle membrane. The protein localises to the synapse. It is found in the synaptosome. It localises to the late endosome membrane. The protein resides in the lysosome membrane. The catalysed reaction is Zn(2+)(in) + 2 H(+)(out) = Zn(2+)(out) + 2 H(+)(in). Probable proton-coupled zinc ion antiporter mediating the import of zinc from cytoplasm into synaptic vesicles and participating to cellular zinc ion homeostasis in the brain. This chain is Probable proton-coupled zinc antiporter SLC30A3, found in Bos taurus (Bovine).